The following is a 275-amino-acid chain: Small ribosomal subunit protein uS3 (275 aa).

Residues 38 to 106 enclose the KH type-2 domain; sequence IRKLLATGLE…QVQLNILEVK (69 aa). The interval 215–275 is disordered; that stretch reads AAAAPASDRP…AEAPAESTES (61 aa). Residues 237-275 are compositionally biased toward low complexity; sequence SGSAGTTATSTEAGRAATSDAPAAGTAAAAEAPAESTES.

Belongs to the universal ribosomal protein uS3 family. In terms of assembly, part of the 30S ribosomal subunit. Forms a tight complex with proteins S10 and S14.

Functionally, binds the lower part of the 30S subunit head. Binds mRNA in the 70S ribosome, positioning it for translation. This is Small ribosomal subunit protein uS3 from Mycolicibacterium smegmatis (strain ATCC 700084 / mc(2)155) (Mycobacterium smegmatis).